We begin with the raw amino-acid sequence, 265 residues long: Undecaprenyl-diphosphatase (265 aa).

The next 8 membrane-spanning stretches (helical) occupy residues 1 to 21 (MDFL…FLPI), 39 to 59 (QGVG…ILYF), 87 to 107 (WAVV…LDYI), 110 to 130 (ALRA…LLAA), 144 to 164 (IGFK…IPGT), 187 to 207 (FSFF…LLTI), 217 to 237 (LGFL…IHFF), and 244 to 264 (FGMW…YLLF).

It belongs to the UppP family.

It localises to the cell inner membrane. It carries out the reaction di-trans,octa-cis-undecaprenyl diphosphate + H2O = di-trans,octa-cis-undecaprenyl phosphate + phosphate + H(+). Its function is as follows. Catalyzes the dephosphorylation of undecaprenyl diphosphate (UPP). Confers resistance to bacitracin. In Idiomarina loihiensis (strain ATCC BAA-735 / DSM 15497 / L2-TR), this protein is Undecaprenyl-diphosphatase.